A 65-amino-acid polypeptide reads, in one-letter code: Large ribosomal subunit protein bL35 (65 aa).

Residues 1–26 form a disordered region; it reads MPKIKTVRGAAKRFKKTASGGFKRKQ. Basic residues predominate over residues 10–26; the sequence is AAKRFKKTASGGFKRKQ.

It belongs to the bacterial ribosomal protein bL35 family.

This is Large ribosomal subunit protein bL35 from Actinobacillus pleuropneumoniae serotype 7 (strain AP76).